The following is a 364-amino-acid chain: D-alanine--D-alanine ligase (364 aa).

The ATP-grasp domain occupies 146–352 (KLCAADAGVE…FDELISRLLL (207 aa)). An ATP-binding site is contributed by 179–234 (TERFAFPVFVKPANLGSSVGISKVHNAAELRPALDKACALDAKVLVEETITGREVE). Asp-305, Glu-319, and Asn-321 together coordinate Mg(2+).

Belongs to the D-alanine--D-alanine ligase family. Requires Mg(2+) as cofactor. Mn(2+) is required as a cofactor.

It localises to the cytoplasm. It carries out the reaction 2 D-alanine + ATP = D-alanyl-D-alanine + ADP + phosphate + H(+). Its pathway is cell wall biogenesis; peptidoglycan biosynthesis. Cell wall formation. This chain is D-alanine--D-alanine ligase, found in Chlorobaculum parvum (strain DSM 263 / NCIMB 8327) (Chlorobium vibrioforme subsp. thiosulfatophilum).